Reading from the N-terminus, the 422-residue chain is UDP-N-acetylglucosamine 1-carboxyvinyltransferase (422 aa).

Position 22–23 (22–23) interacts with phosphoenolpyruvate; the sequence is KN. UDP-N-acetyl-alpha-D-glucosamine is bound at residue Arg-93. Cys-117 serves as the catalytic Proton donor. Position 117 is a 2-(S-cysteinyl)pyruvic acid O-phosphothioketal (Cys-117). UDP-N-acetyl-alpha-D-glucosamine contacts are provided by residues 122–126, Asp-305, and Ile-327; that span reads RPVDQ.

Belongs to the EPSP synthase family. MurA subfamily.

It localises to the cytoplasm. It catalyses the reaction phosphoenolpyruvate + UDP-N-acetyl-alpha-D-glucosamine = UDP-N-acetyl-3-O-(1-carboxyvinyl)-alpha-D-glucosamine + phosphate. Its pathway is cell wall biogenesis; peptidoglycan biosynthesis. In terms of biological role, cell wall formation. Adds enolpyruvyl to UDP-N-acetylglucosamine. The chain is UDP-N-acetylglucosamine 1-carboxyvinyltransferase from Bordetella parapertussis (strain 12822 / ATCC BAA-587 / NCTC 13253).